Here is a 341-residue protein sequence, read N- to C-terminus: Putative UPF0607 protein ENSP00000383144 (341 aa).

Disordered regions lie at residues 70 to 131 and 218 to 279; these read RLPK…NPRP and LMVG…PPAK. A compositionally biased stretch (basic and acidic residues) spans 72–101; it reads PKTEVRAEEPKEATEVKDQVETQEQEDNKR. Residues 108-127 show a composition bias toward polar residues; the sequence is EAASTSRPLETQGNLTSSWY. Residues 243-252 show a composition bias toward basic residues; it reads AGHRSHKRKL.

Belongs to the UPF0607 family.

This chain is Putative UPF0607 protein ENSP00000383144, found in Homo sapiens (Human).